The sequence spans 589 residues: Multidrug transporter FLR2 (589 aa).

The segment at 50 to 116 (KEEMKQDNQT…SSTKDASKPE (67 aa)) is disordered. Residues 56–73 (DNQTSTDSMSTSTQQETD) are compositionally biased toward low complexity. Asparagine 57 is a glycosylation site (N-linked (GlcNAc...) asparagine). Residues 107–116 (SSTKDASKPE) show a composition bias toward basic and acidic residues. Residue asparagine 136 is glycosylated (N-linked (GlcNAc...) asparagine). The next 12 membrane-spanning stretches (helical) occupy residues 143–163 (TFVI…SSIY), 179–199 (VVGT…PIIF), 211–231 (MPLY…CALV), 234–254 (IAGL…VLAT), 275–295 (WAVG…AMVV), 301–321 (WIFW…IFFF), 378–398 (PIIL…YLFF), 417–437 (GLAF…LIIF), 455–475 (LFLI…FFFG), 480–500 (IHWI…FNLF), 516–536 (ASVF…FPLF), and 551–571 (VAWG…IPFV).

It belongs to the major facilitator superfamily.

The protein resides in the cell membrane. Its function is as follows. Multidrug transporter that confers resistance to 5-flucytosine (5-FC) and clotrimazole. Further confers azole drug resistance. Plays direct roles in extrusion of 5-flucytosine and clotrimazole. The chain is Multidrug transporter FLR2 from Candida glabrata (strain ATCC 2001 / BCRC 20586 / JCM 3761 / NBRC 0622 / NRRL Y-65 / CBS 138) (Yeast).